Reading from the N-terminus, the 1589-residue chain is Paternally-expressed gene 3 protein (1589 aa).

One can recognise an SCAN box domain in the interval 46–128; it reads HQRFRNLIYV…TLLENYKEMY (83 aa). Disordered stretches follow at residues 128 to 230, 266 to 306, and 319 to 349; these read YQPE…ESYQ, DGHS…RRGI, and KFIK…MSDD. Residues 129 to 142 are compositionally biased toward acidic residues; it reads QPEDDNNSDVTSDD. 4 stretches are compositionally biased toward basic and acidic residues: residues 143 to 152, 161 to 182, 206 to 225, and 295 to 306; these read DMTRNRRESS, SGDR…DRWS, FEMD…RSQD, and PEAKKSTHRRGI. 3 consecutive C2H2-type zinc fingers follow at residues 454–476, 507–529, and 565–587; these read YVCD…QIMH, FECK…RKIH, and YECR…QKIH. Positions 588 to 607 are enriched in basic and acidic residues; sequence FGDDKDNEREHERERERGET. The tract at residues 588–610 is disordered; sequence FGDDKDNEREHERERERGETFRP. The C2H2-type 4 zinc-finger motif lies at 627 to 649; the sequence is YECKVCGETFLHSSSLKEHQKIH. A disordered region spans residues 838–930; the sequence is LVASKPPRSH…EFSVPSSNVR (93 aa). Positions 868 to 881 are enriched in basic and acidic residues; it reads LNDKRQKIPARENP. The C2H2-type 5 zinc-finger motif lies at 969–991; that stretch reads YECQECGECFAHSSDLTEHQKIH. The disordered stretch occupies residues 1056-1104; the sequence is EKSHGEESQGENTDGEETHSEETHGQETIEDPVIQSSDMEDPQKDDPDD. Over residues 1071 to 1082 the composition is skewed to basic and acidic residues; that stretch reads EETHSEETHGQE. C2H2-type zinc fingers lie at residues 1107-1129, 1163-1185, 1225-1247, 1282-1304, and 1332-1354; these read YECE…QKVH, YECP…QRIH, IRCL…MRLH, FECA…VTVH, and YECK…KELH. The span at 1396–1416 shows a compositional bias: acidic residues; sequence AEPEVEAAEPEVEAAEPEVEA. The interval 1396-1496 is disordered; that stretch reads AEPEVEAAEP…GIEDPEEGED (101 aa). Tandem repeats lie at residues 1398 to 1404, 1405 to 1411, 1412 to 1418, 1419 to 1423, 1426 to 1430, 1433 to 1437, and 1440 to 1444. Residues 1398-1418 form a 3 X 7 AA repeat of P-E-V-E-A-A-E region; sequence PEVEAAEPEVEAAEPEVEAAE. The tract at residues 1419–1444 is 4 X 5 AA repeat of P-X-G-E-A; sequence PNGEAEGPDGEAAEPIGEAGQPNGEA. 2 stretches are compositionally biased toward acidic residues: residues 1450–1467 and 1476–1496; these read DADE…ERAE and PEGD…EGED. 2 consecutive C2H2-type zinc fingers follow at residues 1506 to 1528 and 1565 to 1587; these read YDCH…LKTH and FKCD…QNTH.

This sequence belongs to the krueppel C2H2-type zinc-finger protein family. Homodimer. Interacts with SIAH1A and SIAH2. Interacts with TRAF2.

It is found in the nucleus. The protein resides in the cytoplasm. In terms of biological role, induces apoptosis in cooperation with SIAH1A. Acts as a mediator between p53/TP53 and BAX in a neuronal death pathway that is activated by DNA damage. Acts synergistically with TRAF2 and inhibits TNF induced apoptosis through activation of NF-kappa-B. This Gorilla gorilla gorilla (Western lowland gorilla) protein is Paternally-expressed gene 3 protein (PEG3).